The following is a 244-amino-acid chain: ATP synthase subunit 4, mitochondrial (244 aa).

The transit peptide at 1–36 (MASRLAKSAICAARVRPVLSSRTIPAAATTLTSTRS) directs the protein to the mitochondrion.

It belongs to the eukaryotic ATPase B chain family. In terms of assembly, F-type ATPases have 2 components, CF(1) - the catalytic core - and CF(0) - the membrane proton channel. In yeast, the dimeric form of ATP synthase consists of 17 polypeptides: alpha, beta, gamma, delta, epsilon, 4 (B), 5 (OSCP), 6 (A), 8, 9 (C), d, E (Tim11), f, g, h, i/j and k.

The protein resides in the mitochondrion. It is found in the mitochondrion inner membrane. Its function is as follows. Mitochondrial membrane ATP synthase (F(1)F(0) ATP synthase or Complex V) produces ATP from ADP in the presence of a proton gradient across the membrane which is generated by electron transport complexes of the respiratory chain. F-type ATPases consist of two structural domains, F(1) - containing the extramembraneous catalytic core, and F(0) - containing the membrane proton channel, linked together by a central stalk and a peripheral stalk. During catalysis, ATP synthesis in the catalytic domain of F(1) is coupled via a rotary mechanism of the central stalk subunits to proton translocation. Part of the complex F(0) domain and the peripheric stalk, which acts as a stator to hold the catalytic alpha(3)beta(3) subcomplex and subunit a/ATP6 static relative to the rotary elements. This is ATP synthase subunit 4, mitochondrial (ATP4) from Paracoccidioides brasiliensis.